The chain runs to 837 residues: Translation initiation factor IF-2 (837 aa).

Disordered regions lie at residues 1–44 (MTEK…VRKS) and 62–251 (KAQE…TKPA). Composition is skewed to basic and acidic residues over residues 62-102 (KAQE…EAKP) and 111-165 (ADPE…HNDS). Basic residues predominate over residues 189 to 205 (RENHIRTGKNKVTKAKK). Over residues 206–229 (GGRDDNGSKDERSADRRNQKDMRG) the composition is skewed to basic and acidic residues. Polar residues predominate over residues 242-251 (TLQQAFTKPA). The tr-type G domain occupies 337–506 (QRAPVVTIMG…LLQSEVLELT (170 aa)). The interval 346–353 (GHVDHGKT) is G1. Position 346 to 353 (346 to 353 (GHVDHGKT)) interacts with GTP. Residues 371-375 (GITQH) form a G2 region. Positions 392 to 395 (DTPG) are G3. GTP contacts are provided by residues 392–396 (DTPGH) and 446–449 (NKID). Residues 446–449 (NKID) form a G4 region. Residues 482–484 (SAK) form a G5 region.

Belongs to the TRAFAC class translation factor GTPase superfamily. Classic translation factor GTPase family. IF-2 subfamily.

It is found in the cytoplasm. Functionally, one of the essential components for the initiation of protein synthesis. Protects formylmethionyl-tRNA from spontaneous hydrolysis and promotes its binding to the 30S ribosomal subunits. Also involved in the hydrolysis of GTP during the formation of the 70S ribosomal complex. The polypeptide is Translation initiation factor IF-2 (Actinobacillus succinogenes (strain ATCC 55618 / DSM 22257 / CCUG 43843 / 130Z)).